A 314-amino-acid polypeptide reads, in one-letter code: Thioredoxin reductase aclD (314 aa).

FAD-binding positions include 13-16 (GGPA), 35-40 (DSKSYR), H47, and A112. A disulfide bridge links C136 with C139. Residues D281 and 288–289 (AA) contribute to the FAD site.

This sequence belongs to the class-II pyridine nucleotide-disulfide oxidoreductase family. Homodimer. The cofactor is FAD.

The protein operates within mycotoxin biosynthesis. In terms of biological role, thioredoxin reductase; part of the gene cluster that mediates the biosynthesis of aspirochlorine (or antibiotic A30641), an unusual halogenated spiro compound with distinctive antifungal properties due to selective inhibition of protein biosynthesis, and which is also active against bacteria, viruses, and murine tumor cells. The non-ribosomal peptide synthetase (NRPS) aclP is responsible the formation of the diketopiperazine (DKP) core from the condensation of 2 phenylalanine residues. One Phe residue is tailored into chlorotyrosine by hydroxylation and chlorination, whereas the second Phe undergoes an unprecedented C-C bond cleavage to be converted into glycine. After formation of the DKP, sulfur is incorporated into the DKP by conjugation with glutathione by aclG, followed by its stepwise degradation to the thiol by aclI, aclJ and aclK, and the dithiol oxidation by aclT. In addition, oxygenases (aclB, aclC, aclL and aclO) and O-methyltransferases (aclM and aclU) act as tailoring enzymes to produce the intermediate dechloroaspirochlorine. Ultimately, chlorination of dechloroaspirochlorine by the halogenase aclH is the last step in the aspirochlorine pathway. The chain is Thioredoxin reductase aclD from Aspergillus oryzae (strain ATCC 42149 / RIB 40) (Yellow koji mold).